The chain runs to 654 residues: Translation factor GUF1, mitochondrial (654 aa).

In terms of domain architecture, tr-type G spans Glu57–Val237. GTP contacts are provided by residues Ala66 to Ser73, Asp130 to His134, and Asn184 to Asp187.

The protein belongs to the TRAFAC class translation factor GTPase superfamily. Classic translation factor GTPase family. LepA subfamily.

It is found in the mitochondrion inner membrane. It carries out the reaction GTP + H2O = GDP + phosphate + H(+). Promotes mitochondrial protein synthesis. May act as a fidelity factor of the translation reaction, by catalyzing a one-codon backward translocation of tRNAs on improperly translocated ribosomes. Binds to mitochondrial ribosomes in a GTP-dependent manner. The protein is Translation factor GUF1, mitochondrial of Candida albicans (strain WO-1) (Yeast).